A 280-amino-acid polypeptide reads, in one-letter code: MTTLIRRGRRAEEGQERRADSEDSIKDKDEEESADSKDIRLTLMEEVLLLGLKDKEGYTSFWNDCISSGLRGGILIELFLRGRVVLEPATIRKKRLIDKKVLLKSDKLTGDVLLDETIKHMKATEPAETVQSWIELLTGETWNPFKLQYQLRNVRERIAKNLVEKGILTTEKQNFLLFDMTTHPVTNTTEKQRLVKKLQESLLERWVNDPHRMDKRTLSLLVLAHSSDVLENAFSSLSDEKYDMAMNRSKELLELDPDTEGMKPNACEMIWAVLSAFNKS.

The disordered stretch occupies residues 1 to 32 (MTTLIRRGRRAEEGQERRADSEDSIKDKDEEE). Over residues 10 to 32 (RAEEGQERRADSEDSIKDKDEEE) the composition is skewed to basic and acidic residues. A 1,2-diacyl-sn-glycero-3-phospho-(1D-myo-inositol 4-phosphate) contacts are provided by W62, R71, R152, and R155. The segment at 171 to 182 (EKQNFLLFDMTT) is beta-hairpin required for oligomerization.

This sequence belongs to the GOLPH3/VPS74 family. In terms of assembly, homooligomer.

It is found in the golgi apparatus. Its subcellular location is the golgi stack membrane. The protein localises to the trans-Golgi network membrane. Phosphatidylinositol-4-phosphate-binding protein that may play a role in the process of vesicle budding at the Golgi and anterograde transport to the plasma membrane. The polypeptide is Golgi phosphoprotein 3-like A (golph3l-a) (Xenopus laevis (African clawed frog)).